The chain runs to 76 residues: Omega-agatoxin-Aa3b (76 aa).

Cystine bridges form between Cys2/Cys19, Cys9/Cys25, Cys16/Cys52, Cys18/Cys40, Cys27/Cys38, and Cys59/Cys67.

This sequence belongs to the neurotoxin 04 (omega-agtx) family. 03 (type II/III omega-agtx) subfamily. Expressed by the venom gland.

Its subcellular location is the secreted. Omega-agatoxins are antagonists of voltage-gated calcium channels. This toxin blocks calcium channels in insect central neurons but not at peripheral neuromuscular junctions. In vertebrates, it is broadly active against all high-threshold Cav1/CACNA1 channels and Cav2.2/CACNA1B channels. In Agelenopsis aperta (North American funnel-web spider), this protein is Omega-agatoxin-Aa3b.